We begin with the raw amino-acid sequence, 118 residues long: Non-specific lipid-transfer protein D (118 aa).

Positions Met1–Ala25 are cleaved as a signal peptide. Disulfide bonds link Cys29–Cys77, Cys39–Cys54, Cys55–Cys100, and Cys75–Cys114.

It belongs to the plant LTP family.

In terms of biological role, plant non-specific lipid-transfer proteins transfer phospholipids as well as galactolipids across membranes. May play a role in wax or cutin deposition in the cell walls of expanding epidermal cells and certain secretory tissues. This is Non-specific lipid-transfer protein D (WAX9D) from Brassica oleracea var. italica (Broccoli).